A 245-amino-acid chain; its full sequence is tRNA pseudouridine synthase A (245 aa).

Catalysis depends on aspartate 52, which acts as the Nucleophile. Tyrosine 111 contacts substrate.

It belongs to the tRNA pseudouridine synthase TruA family. Homodimer.

It carries out the reaction uridine(38/39/40) in tRNA = pseudouridine(38/39/40) in tRNA. Its function is as follows. Formation of pseudouridine at positions 38, 39 and 40 in the anticodon stem and loop of transfer RNAs. The polypeptide is tRNA pseudouridine synthase A (Bradyrhizobium sp. (strain BTAi1 / ATCC BAA-1182)).